The chain runs to 217 residues: MMAAGPRTSLLLAFALLCLPWTQVVGAFPAMSLSSLFANAVLWAQHLHQLAADTFKEFERTYIPEGQRYSIQNTQVAFCFSETIPAPTGKNEAQQKSDLELLRISLLLIQSWLGPLQFLSRVFTNSLVFGTSDRVYEKLKDLEEGILALMRELEDGTPRAGQILKQTYDKFDTNMRSDDALLKNYGLLSCFRKDLHKTETYLRVMKCRRFGEASCAF.

An N-terminal signal peptide occupies residues 1 to 26; sequence MMAAGPRTSLLLAFALLCLPWTQVVG. His-46 contacts Zn(2+). Cys-79 and Cys-190 are disulfide-bonded. Ser-132 is modified (phosphoserine). Residue Glu-199 participates in Zn(2+) binding. The cysteines at positions 207 and 215 are disulfide-linked.

It belongs to the somatotropin/prolactin family.

The protein localises to the secreted. Functionally, plays an important role in growth control. Its major role in stimulating body growth is to stimulate the liver and other tissues to secrete IGF1. It stimulates both the differentiation and proliferation of myoblasts. It also stimulates amino acid uptake and protein synthesis in muscle and other tissues. In Bubalus bubalis (Domestic water buffalo), this protein is Somatotropin (GH1).